Here is a 615-residue protein sequence, read N- to C-terminus: Zinc finger protein 653 (615 aa).

Disordered regions lie at residues 1–46, 93–115, and 174–235; these read MAER…ARRR, RSGR…KRRR, and PLSD…SGLI. The segment covering 7-25 has biased composition (low complexity); the sequence is EPGAEAEAGAGGEAAAEEG. Positions 106-115 are enriched in basic residues; that stretch reads KKPKRKKRRR. Low complexity-rich tracts occupy residues 192–203 and 212–232; these read GSSDSSSSGSSS and QPAK…TGSS. 5 consecutive C2H2-type zinc fingers follow at residues 467–492, 498–522, 528–550, 556–578, and 586–609; these read FHCP…NLVH, KVCP…MIIH, FTCE…RRTH, LQCE…MKKH, and FTCD…LKSH.

Belongs to the krueppel C2H2-type zinc-finger protein family. In terms of assembly, interacts with NR5A1. In terms of tissue distribution, highly expressed in testis and spleen. Moderately expressed in lung, adrenal gland, uterus, and ovary. Very low expression in pancreas, heart, skeletal muscle, adipose tissue, kidney, and liver.

The protein localises to the nucleus. Functionally, transcriptional repressor. May repress NR5A1, PPARG, NR1H3, NR4A2, ESR1 and NR3C1 transcriptional activity. The protein is Zinc finger protein 653 (Znf653) of Mus musculus (Mouse).